A 793-amino-acid chain; its full sequence is Potassium transporter 18 (793 aa).

Residues M1–S53 are Cytoplasmic-facing. The chain crosses the membrane as a helical span at residues L54–P74. The Extracellular segment spans residues H75–A86. A helical membrane pass occupies residues L87–L107. Over R108–N172 the chain is Cytoplasmic. Residues L173 to P193 form a helical membrane-spanning segment. Residues A194–D214 are Extracellular-facing. A helical transmembrane segment spans residues V215–T235. The Cytoplasmic portion of the chain corresponds to D236–K237. A helical transmembrane segment spans residues V238–A258. Over V259–S287 the chain is Extracellular. Residues W288–L308 traverse the membrane as a helical segment. Position 309 (S309) is a topological domain, cytoplasmic. Residues Y310–L330 form a helical membrane-spanning segment. Topologically, residues Q331–Y351 are extracellular. Residues I352–V372 traverse the membrane as a helical segment. The Cytoplasmic segment spans residues A373–Q409. A helical transmembrane segment spans residues I410–F430. At K431 to T442 the chain is on the extracellular side. N-linked (GlcNAc...) asparagine glycosylation is present at N432. A helical transmembrane segment spans residues A443 to W463. Topologically, residues R464–T468 are cytoplasmic. The chain crosses the membrane as a helical span at residues L469–V489. The Extracellular segment spans residues R490–Q494. The chain crosses the membrane as a helical span at residues G495–Y515. The Cytoplasmic portion of the chain corresponds to G516–V793.

Belongs to the HAK/KUP transporter (TC 2.A.72.3) family.

Its subcellular location is the membrane. High-affinity potassium transporter. This Oryza sativa subsp. japonica (Rice) protein is Potassium transporter 18 (HAK18).